The primary structure comprises 338 residues: NAC domain-containing protein 46 (338 aa).

One can recognise an NAC domain in the interval 20 to 171 (LPPGFRFHPT…EWVVCRVFHK (152 aa)). A DNA-binding region spans residues 118-177 (VGMKKTLVFYTGRAPKGEKTNWVMHEYRLDGKYSYHNLPKTARDEWVVCRVFHKNAPSTT).

In terms of assembly, interacts with RCD1.

The protein resides in the nucleus. Its function is as follows. Transcriptional activator that acts as a positive regulator of leaf senescence. Activates NYC1, SGR1, SGR2 and PAO, which are genes involved in chlorophyll catabolic processes. Activates senescence-associated genes, such as RNS1, SAG12 and SAG13. This is NAC domain-containing protein 46 from Arabidopsis thaliana (Mouse-ear cress).